The primary structure comprises 265 residues: 3-deoxy-manno-octulosonate cytidylyltransferase 2 (265 aa).

This sequence belongs to the KdsB family.

It localises to the cytoplasm. It carries out the reaction 3-deoxy-alpha-D-manno-oct-2-ulosonate + CTP = CMP-3-deoxy-beta-D-manno-octulosonate + diphosphate. It functions in the pathway nucleotide-sugar biosynthesis; CMP-3-deoxy-D-manno-octulosonate biosynthesis; CMP-3-deoxy-D-manno-octulosonate from 3-deoxy-D-manno-octulosonate and CTP: step 1/1. Its pathway is bacterial outer membrane biogenesis; lipopolysaccharide biosynthesis. Functionally, activates KDO (a required 8-carbon sugar) for incorporation into bacterial lipopolysaccharide in Gram-negative bacteria. The sequence is that of 3-deoxy-manno-octulosonate cytidylyltransferase 2 from Burkholderia lata (strain ATCC 17760 / DSM 23089 / LMG 22485 / NCIMB 9086 / R18194 / 383).